The sequence spans 443 residues: Trigger factor (443 aa).

Residues 163 to 249 enclose the PPIase FKBP-type domain; it reads KDAAIIDYQA…LKSLKEEILP (87 aa).

Belongs to the FKBP-type PPIase family. Tig subfamily.

The protein localises to the cytoplasm. It catalyses the reaction [protein]-peptidylproline (omega=180) = [protein]-peptidylproline (omega=0). In terms of biological role, involved in protein export. Acts as a chaperone by maintaining the newly synthesized protein in an open conformation. Functions as a peptidyl-prolyl cis-trans isomerase. The protein is Trigger factor of Desulfosudis oleivorans (strain DSM 6200 / JCM 39069 / Hxd3) (Desulfococcus oleovorans).